Here is a 327-residue protein sequence, read N- to C-terminus: tRNA N6-adenosine threonylcarbamoyltransferase (327 aa).

Positions 109 and 113 each coordinate Fe cation. Substrate is bound by residues 132-136 (MVSGG), aspartate 165, glycine 178, aspartate 182, and asparagine 268. Residue aspartate 296 participates in Fe cation binding.

It belongs to the KAE1 / TsaD family. As to quaternary structure, forms a hexamer composed of two TsaB, TsaD and TsaE trimers. Fe(2+) is required as a cofactor.

The protein resides in the cytoplasm. It catalyses the reaction L-threonylcarbamoyladenylate + adenosine(37) in tRNA = N(6)-L-threonylcarbamoyladenosine(37) in tRNA + AMP + H(+). Required for the formation of a threonylcarbamoyl group on adenosine at position 37 (t(6)A37) in tRNAs that read codons beginning with adenine. Is involved in the transfer of the threonylcarbamoyl moiety of threonylcarbamoyl-AMP (TC-AMP) to the N6 group of A37, together with TsaE and TsaB. TsaD likely plays a direct catalytic role in this reaction. The polypeptide is tRNA N6-adenosine threonylcarbamoyltransferase (Thermotoga maritima (strain ATCC 43589 / DSM 3109 / JCM 10099 / NBRC 100826 / MSB8)).